Reading from the N-terminus, the 390-residue chain is Monomeric sarcosine oxidase (390 aa).

6 to 36 (DVIVVGAGSMGMAAGYQLAKQGVKTLLVDAF) contacts FAD. Cysteine 316 is modified (S-8alpha-FAD cysteine).

As to quaternary structure, monomer. The cofactor is FAD.

The protein localises to the cytoplasm. It catalyses the reaction sarcosine + O2 + H2O = formaldehyde + glycine + H2O2. With respect to regulation, pyrrole-2-carboxylate is a competitive inhibitor. N-(cyclopropyl)glycine (CPG) is a mechanism-based inhibitor and inactivates the enzyme by covalently modifying the flavin. In terms of biological role, catalyzes the oxidative demethylation of sarcosine. Can also oxidize other secondary amino acids such as N-methyl-L-alanine. This chain is Monomeric sarcosine oxidase (soxA), found in Bacillus sp. (strain B-0618).